The following is a 315-amino-acid chain: Methionyl-tRNA formyltransferase (315 aa).

113–116 (SLLP) is a binding site for (6S)-5,6,7,8-tetrahydrofolate.

This sequence belongs to the Fmt family.

The catalysed reaction is L-methionyl-tRNA(fMet) + (6R)-10-formyltetrahydrofolate = N-formyl-L-methionyl-tRNA(fMet) + (6S)-5,6,7,8-tetrahydrofolate + H(+). In terms of biological role, attaches a formyl group to the free amino group of methionyl-tRNA(fMet). The formyl group appears to play a dual role in the initiator identity of N-formylmethionyl-tRNA by promoting its recognition by IF2 and preventing the misappropriation of this tRNA by the elongation apparatus. The protein is Methionyl-tRNA formyltransferase of Shigella sonnei (strain Ss046).